The chain runs to 684 residues: Glycine--tRNA ligase beta subunit (684 aa).

This sequence belongs to the class-II aminoacyl-tRNA synthetase family. As to quaternary structure, tetramer of two alpha and two beta subunits.

It is found in the cytoplasm. The catalysed reaction is tRNA(Gly) + glycine + ATP = glycyl-tRNA(Gly) + AMP + diphosphate. This is Glycine--tRNA ligase beta subunit from Pseudomonas fluorescens (strain SBW25).